A 232-amino-acid polypeptide reads, in one-letter code: Ubiquinone biosynthesis O-methyltransferase (232 aa).

S-adenosyl-L-methionine-binding residues include Arg-36, Gly-55, Asp-76, and Met-120.

This sequence belongs to the methyltransferase superfamily. UbiG/COQ3 family.

The enzyme catalyses a 3-demethylubiquinol + S-adenosyl-L-methionine = a ubiquinol + S-adenosyl-L-homocysteine + H(+). The catalysed reaction is a 3-(all-trans-polyprenyl)benzene-1,2-diol + S-adenosyl-L-methionine = a 2-methoxy-6-(all-trans-polyprenyl)phenol + S-adenosyl-L-homocysteine + H(+). It participates in cofactor biosynthesis; ubiquinone biosynthesis. O-methyltransferase that catalyzes the 2 O-methylation steps in the ubiquinone biosynthetic pathway. The chain is Ubiquinone biosynthesis O-methyltransferase from Burkholderia lata (strain ATCC 17760 / DSM 23089 / LMG 22485 / NCIMB 9086 / R18194 / 383).